The sequence spans 146 residues: Hemoglobin cathodic subunit beta (146 aa).

A Globin domain is found at 2–146 (QWSSSERSVI…VVSGLSKQYF (145 aa)). Heme b is bound at residue H63.

Heterotetramer of two alpha and two beta chains. Red blood cells.

In terms of biological role, involved in oxygen transport from the gills to various peripheral tissues. In Ophisurus serpens (Serpent eel), this protein is Hemoglobin cathodic subunit beta.